A 1194-amino-acid chain; its full sequence is MFTLDSFRKDRTQHRQRQCKLPPPRLPPMCVNPAPGGTISRASRDLLKEFPQPKNLLNSVIGRALGISHAKDKLVYVHTNGPKKKKVTLHIKWPKSVEVEGYGSKKIDAERQAAAAACQLFKGWGLLGPRNELFDAAKYRVLADRFGSPADSWWRPEPTMPPTSWRQLNPENIRPAGTGGLSRSLGREEEEDEEEELEEGTIDVTEFLSMTQQDSHNPLRDSRGGSFEMTDDDSAIRALTQFPLPKNLLAKVIQIATSSSTAKNLMQFHTVGTKTKLATLTLLWPCPMTFVAKGRRKAEAENKAAALACKKLKSLGLVDRNNEPLTHAMYNLASLRELGETQRRPCTIQVPEPILRKIEAFLSHYPVDSSWISPELRLQSDDILPLGKDSGPLSDPITGKPYMPLSEAEEVRLSQSLLELWRRRGPIWQEAPQLPVDPHRDTILSAIEQHPVVVISGDTGCGKTTRIPQLLLERYVTEGRGARCNVIITQPRRISAVSVAQRVSHELGPSLRRNVGFQVRLESKPPARGGALLFCTVGILLRKLQSNPSLEGVSHVIVDEVHERDVNTDFLLILLKGLQRLNPALRLVLMSATGDNERFSRYFGGCPVIKVPGFMYPVKEHYLEDILAKLGKHQYPHRHRHHESEDECALDLDLVTDLVLHIDARGEPGGILCFLPGWQEIKGVQQRLQEALGMHESKYLILPVHSNIPMMDQKAIFQQPPLGVRKIVLATNIAETSITVNDIVHVVDSGLHKEERYDLKTKVSCLETVWVSRANVIQRRGRAGRCQSGFAYHLFPRSRLEKMVPFQVPEILRTPLENLVLQAKIHMPEKTAVEFLSKAVDSPNIKAVDEAVILLQEIGVLDQREYLTTLGQRLAHISTDPRLAKAIVLAAIFRCLHPLLVVVSCLTRDPFSSSLQNRAEVDKVKALLSHDSGSDHLAFVRAVAGWEEVLRWQDRTSRENYLEENLLYAPSLRFIHGLIKQFSENIYEAFLVGKPSDCTLPSAQCNEYSEEEELVKGVLMAGLYPNLIQVRQGKVTRQGKFKPNSVTYRTKSGNILLHKSTINREATRLRSRWLTYFMAVKSNGSVFVRDSSQVHPLAVLLLTDGDVHIRDDGRRATISLSDSDLLRLEGDSRTVRLLRELRRALGRMVERSLRSELAALPLSVQQEHGQLLALLAELLRGPCGSFDVRKTADD.

Basic and acidic residues predominate over residues Met-1 to Asp-10. Residues Met-1–Pro-27 form a disordered region. Ser-6 carries the post-translational modification Phosphoserine. One can recognise a DRBM domain in the interval Pro-53–Phe-121. A disordered region spans residues Trp-153–Gly-200. Acidic residues predominate over residues Glu-188–Gly-200. A phosphoserine mark is found at Ser-226 and Ser-380. In terms of domain architecture, Helicase ATP-binding spans Leu-444–Pro-612. Gly-457–Thr-464 serves as a coordination point for ATP. Residues Asp-559–His-562 carry the DEAH box motif. The 174-residue stretch at Leu-654–Met-827 folds into the Helicase C-terminal domain.

This sequence belongs to the DEAD box helicase family. DEAH subfamily. Identified in a complex with TFAM and SSBP1. Interacts (via N-terminus) with ZC3HAV1 (via N-terminal domain) in an RNA-independent manner. Found in a complex with GRSF1, DDX28, FASTKD2 and FASTKD5.

It localises to the cytoplasm. It is found in the mitochondrion. The protein resides in the mitochondrion matrix. Its subcellular location is the mitochondrion nucleoid. The enzyme catalyses ATP + H2O = ADP + phosphate + H(+). In terms of biological role, RNA-dependent helicase. Plays an important role in the assembly of the mitochondrial large ribosomal subunit. Associates with mitochondrial DNA. Required for optimal function of the zinc-finger antiviral protein ZC3HAV1. Involved in nervous system development and differentiation through its involvement in the up-regulation of a number of genes which are required for neurogenesis, including GSC, NCAM1, neurogenin, and NEUROD. The polypeptide is ATP-dependent RNA helicase DHX30 (Dhx30) (Rattus norvegicus (Rat)).